The sequence spans 444 residues: Chitinase-like protein Idgf5 (444 aa).

Positions 1-26 are cleaved as a signal peptide; that stretch reads MMWIQKNPFLGLLLCSFLAFFQSTYA. The GH18 domain occupies 29–444; the sequence is GKLVCFYDAQ…PILRSIKFKL (416 aa). Cysteines 33 and 60 form a disulfide. N-linked (GlcNAc...) asparagine glycans are attached at residues N289 and N311. Residues C349 and C429 are joined by a disulfide bond.

The protein belongs to the glycosyl hydrolase 18 family. IDGF subfamily. Post-translationally, glycosylated.

The protein localises to the secreted. In terms of biological role, probably required to stimulate the proliferation, polarization and motility of imaginal disk cells. May act by stabilizing the binding of insulin-like peptides to its receptor through a simultaneous interaction with both molecules to form a multiprotein signaling complex. The sequence is that of Chitinase-like protein Idgf5 (Idgf5) from Drosophila melanogaster (Fruit fly).